Reading from the N-terminus, the 308-residue chain is Cell division protein FtsQ (308 aa).

Over M1 to S53 the chain is Cytoplasmic. A helical membrane pass occupies residues L54–M74. Residues N75–V308 are Periplasmic-facing. Residues F87 to R155 form the POTRA domain.

Belongs to the FtsQ/DivIB family. FtsQ subfamily.

Its subcellular location is the cell inner membrane. Its function is as follows. Essential cell division protein. The chain is Cell division protein FtsQ from Bartonella bacilliformis.